Reading from the N-terminus, the 324-residue chain is NAC domain-containing protein 21/22 (324 aa).

One can recognise an NAC domain in the interval 19-171 (LPPGFRFHPK…DWVLCRVFHK (153 aa)). Positions 120-137 (RKTLVFYQGRAPRGRKTD) match the Bipartite nuclear localization signal motif.

As to quaternary structure, dimer. Interacts with SINAT5. In terms of processing, ubiquitinated. The interaction with SINAT5 mediate its proteasome-dependent degradation. In terms of tissue distribution, predominantly expressed in the root tip and in lateral root initiation sites. Also detected in expanding cotyledon, and in leaf primordia.

The protein resides in the nucleus. In terms of biological role, transcriptional activator that mediates auxin signaling to promote lateral root development. Activates the expression of two downstream auxin-responsive genes, DBP and AIR3. This Arabidopsis thaliana (Mouse-ear cress) protein is NAC domain-containing protein 21/22 (NAC021).